A 531-amino-acid chain; its full sequence is Nuclear RNA export factor 3 (531 aa).

Disordered regions lie at residues 33–59 and 83–106; these read RSEP…HGAH and QDQT…GNMP. A compositionally biased stretch (polar residues) spans 41–50; the sequence is MHSSSHQQQD. Over residues 83-102 the composition is skewed to basic and acidic residues; it reads QDQTHVNMEREQKPPERRME. Residues 113–192 enclose the RRM domain; it reads WFKITVPFGI…IFVNPAGIPH (80 aa). The NTF2 domain maps to 344–494; that stretch reads LVLQFLQQYY…LCIVNDKLFV (151 aa).

Belongs to the NXF family. As to quaternary structure, interacts with NXT1, NXT2, E1B-AP5 and CRM1 nuclear export factor. In terms of tissue distribution, expressed at high level in testis and at low level in a small number of tissues.

Its subcellular location is the nucleus. It is found in the cytoplasm. Its function is as follows. May function as a tissue-specific nuclear mRNA export factor. This Homo sapiens (Human) protein is Nuclear RNA export factor 3 (NXF3).